Here is a 292-residue protein sequence, read N- to C-terminus: MRRSPDLPYIILFLIPALILIGIFVYFAVVWNIYISFTDWRGLIPSYHFVGLAQYKQLIHDPIFWTSLRNNLLLILLFVPGSLLLGLFLAILLDMKVRFESGFRTIYVLPFALSFVVTATLWAWMYDPSSGVLNVLFDKLGLDFLKSGWITDPKIAMYCIIIALIWQFSGYTMIIYLAGIRSIPIEQYEGALIDGASTWQLYRYIVIPQLTKPTLSAFVVLMVFSLKAFDFIWVLTRGGPGTSTFILAIEMYKETFAKTNFAYGAAIATILLLMALVVVLPYLYWSYKGEER.

Helical transmembrane passes span 10-30 (IILF…FAVV), 72-92 (LLLI…LAIL), 106-126 (IYVL…AWMY), 160-180 (IIIA…LAGI), 215-235 (LSAF…IWVL), and 261-281 (FAYG…VVLP). In terms of domain architecture, ABC transmembrane type-1 spans 68 to 284 (LRNNLLLILL…ALVVVLPYLY (217 aa)).

The protein belongs to the binding-protein-dependent transport system permease family. MalFG subfamily.

The protein resides in the cell membrane. Probably part of a binding-protein-dependent transport system PH1214/15/16. Probably responsible for the translocation of the substrate across the membrane. The chain is Probable ABC transporter permease protein PH1215 from Pyrococcus horikoshii (strain ATCC 700860 / DSM 12428 / JCM 9974 / NBRC 100139 / OT-3).